We begin with the raw amino-acid sequence, 251 residues long: Large ribosomal subunit protein uL16m (251 aa).

A mitochondrion-targeting transit peptide spans 1 to 29 (MWRLLSGARAPVLRATLSDSWAAPPARAG).

This sequence belongs to the universal ribosomal protein uL16 family. In terms of assembly, component of the mitochondrial ribosome large subunit (39S) which comprises a 16S rRNA and about 50 distinct proteins.

The protein resides in the mitochondrion. The sequence is that of Large ribosomal subunit protein uL16m (MRPL16) from Bos taurus (Bovine).